A 130-amino-acid polypeptide reads, in one-letter code: MSAATDQILEQLKTLSLLEASELVKQIEEAFGVSAAAPVGGMMMMAGPGGAAPAEEAVEQTEFEVILDSVPADKKIAVLKIVRELTGLGLKEAKDLVEAAPKAVKEGIAKDAAEDAKKRIEEAGGKVTIK.

Belongs to the bacterial ribosomal protein bL12 family. In terms of assembly, homodimer. Part of the ribosomal stalk of the 50S ribosomal subunit. Forms a multimeric L10(L12)X complex, where L10 forms an elongated spine to which 2 to 4 L12 dimers bind in a sequential fashion. Binds GTP-bound translation factors.

Functionally, forms part of the ribosomal stalk which helps the ribosome interact with GTP-bound translation factors. Is thus essential for accurate translation. The sequence is that of Large ribosomal subunit protein bL12 from Nostoc punctiforme (strain ATCC 29133 / PCC 73102).